A 286-amino-acid chain; its full sequence is 4-diphosphocytidyl-2-C-methyl-D-erythritol kinase (286 aa).

Lys11 is an active-site residue. Residue 94 to 104 (PMGGGIGGGSS) coordinates ATP. Asp136 is a catalytic residue.

Belongs to the GHMP kinase family. IspE subfamily.

The enzyme catalyses 4-CDP-2-C-methyl-D-erythritol + ATP = 4-CDP-2-C-methyl-D-erythritol 2-phosphate + ADP + H(+). It participates in isoprenoid biosynthesis; isopentenyl diphosphate biosynthesis via DXP pathway; isopentenyl diphosphate from 1-deoxy-D-xylulose 5-phosphate: step 3/6. In terms of biological role, catalyzes the phosphorylation of the position 2 hydroxy group of 4-diphosphocytidyl-2C-methyl-D-erythritol. This chain is 4-diphosphocytidyl-2-C-methyl-D-erythritol kinase, found in Pseudomonas putida (strain W619).